Reading from the N-terminus, the 312-residue chain is Signal peptidase I (312 aa).

The helical transmembrane segment at 7 to 27 threads the bilayer; sequence IFLLTSTFFTGILWIIDHILL. At 28-63 the chain is on the cytoplasmic side; the sequence is IKNYFYNKKKTKNNNTILINKVILENKKCFFRSLSS. A helical membrane pass occupies residues 64–84; it reads LFPTFFIVFIIRSFIYEPFQI. Topologically, residues 85–312 are extracellular; it reads PSGSMMPTLL…IRIKRIGNIY (228 aa). Active-site residues include Ser-88 and Lys-142.

It belongs to the peptidase S26 family.

The protein resides in the cell membrane. The catalysed reaction is Cleavage of hydrophobic, N-terminal signal or leader sequences from secreted and periplasmic proteins.. The sequence is that of Signal peptidase I (lepB) from Buchnera aphidicola subsp. Schizaphis graminum (strain Sg).